Here is an 84-residue protein sequence, read N- to C-terminus: Anaphase-promoting complex subunit 11 (84 aa).

Positions 23, 26, 34, 37, 44, 51, 53, 56, 58, 59, 73, and 76 each coordinate Zn(2+). The segment at 34 to 77 (CPDCKVPGDDCPLVWGQCSHCFHMHCILKWLNAQQVQQHCPMCR) adopts an RING-type zinc-finger fold.

Belongs to the RING-box family. In terms of assembly, the mammalian APC/C is composed at least of 14 distinct subunits ANAPC1, ANAPC2, CDC27/APC3, ANAPC4, ANAPC5, CDC16/APC6, ANAPC7, CDC23/APC8, ANAPC10, ANAPC11, CDC26/APC12, ANAPC13, ANAPC15 and ANAPC16 that assemble into a complex of at least 19 chains with a combined molecular mass of around 1.2 MDa; APC/C interacts with FZR1 and FBXO5. Interacts with the cullin domain of ANAPC2. Interacts with UBE2D2. Auto-ubiquitinated.

The protein localises to the cytoplasm. The protein resides in the nucleus. The protein operates within protein modification; protein ubiquitination. In terms of biological role, together with the cullin protein ANAPC2, constitutes the catalytic component of the anaphase promoting complex/cyclosome (APC/C), a cell cycle-regulated E3 ubiquitin ligase that controls progression through mitosis and the G1 phase of the cell cycle. The APC/C complex acts by mediating ubiquitination and subsequent degradation of target proteins: it mainly mediates the formation of 'Lys-11'-linked polyubiquitin chains and, to a lower extent, the formation of 'Lys-48'- and 'Lys-63'-linked polyubiquitin chains. The APC/C complex catalyzes assembly of branched 'Lys-11'-/'Lys-48'-linked branched ubiquitin chains on target proteins. May recruit the E2 ubiquitin-conjugating enzymes to the complex. The chain is Anaphase-promoting complex subunit 11 (Anapc11) from Mus musculus (Mouse).